The primary structure comprises 504 residues: Signal transduction histidine-protein kinase/phosphatase MprB (504 aa).

Over 1-26 the chain is Cytoplasmic; sequence MWWFRRRDRAPLRATSSLSLRWRVML. A helical membrane pass occupies residues 27–47; it reads LAMSMVAMVVVLMSFAVYAVI. Topologically, residues 48–163 are extracellular; that stretch reads SAALYSDIDN…PTEAVMNKLR (116 aa). The chain crosses the membrane as a helical span at residues 164–184; sequence WVLLIVGGIGVAVAAVAGGMV. The Cytoplasmic portion of the chain corresponds to 185–504; the sequence is TRAGLRPVGR…SVESQSTRAT (320 aa). Residues 186–238 enclose the HAMP domain; that stretch reads RAGLRPVGRLTEAAERVARTDDLRPIPVFGSDELARLTEAFNLMLRALAESRE. The Histidine kinase domain occupies 246–466; sequence DAGHELRTPL…SIYVLLPGRR (221 aa). At His249 the chain carries Phosphohistidine; by autocatalysis. A disordered region spans residues 471–504; that stretch reads QLPGATAGARSTDIENSRGSANVISVESQSTRAT. A compositionally biased stretch (polar residues) spans 487–504; that stretch reads SRGSANVISVESQSTRAT.

Requires Mg(2+) as cofactor. Mn(2+) serves as cofactor. In terms of processing, autophosphorylated.

Its subcellular location is the cell membrane. The enzyme catalyses ATP + protein L-histidine = ADP + protein N-phospho-L-histidine.. Its function is as follows. Member of the two-component regulatory system MprB/MprA which contributes to maintaining a balance among several systems involved in stress resistance and is required for establishment and maintenance of persistent infection in the host. In response to environmental signals MprB acts both as a membrane-associated protein kinase that undergoes autophosphorylation and subsequently transfers the phosphate to MprA, and a protein phosphatase that dephosphorylates phospho-MprA. The protein is Signal transduction histidine-protein kinase/phosphatase MprB (mprB) of Mycobacterium tuberculosis (strain ATCC 25177 / H37Ra).